The following is a 205-amino-acid chain: Thymidylate kinase (205 aa).

Position 7–14 (7–14 (GIDGSGKT)) interacts with ATP.

It belongs to the thymidylate kinase family.

The catalysed reaction is dTMP + ATP = dTDP + ADP. Phosphorylation of dTMP to form dTDP in both de novo and salvage pathways of dTTP synthesis. This is Thymidylate kinase from Wolbachia sp. subsp. Brugia malayi (strain TRS).